The sequence spans 151 residues: Small ribosomal subunit protein uS15 (151 aa).

This sequence belongs to the universal ribosomal protein uS15 family.

The chain is Small ribosomal subunit protein uS15 (RPS13) from Zea mays (Maize).